Consider the following 510-residue polypeptide: MKLAYWMYAGPAHIGTLRVASSFKNVHSIMHAPLGDDYFNVMRSMLERERDFTPVTTSVVDRQVLARGSDEKVIRNIVRKDGEEQPDLIVVTPTCTSSILQEDLHHFVRQAQLSSRCDVLLADVNHYRVNELQAAERTLHQIVEFYINKARKSGELSGPPRRTERPSCNILGISSLGFHHAHDLRELKKLLQDLGIELNLVIPQGASVHNLKHLGRAWFNVVPYRELGPMTARYLQEQFGTPYVEITPMGVVETARFIRQIQQVLNEQGIPVDYEPYIQEQTLYVSQAAWFSRSIDCQNLTGKKAVVFGDCTHAAAITKILAREMGVHVVWAGSYCTYDGEWFQAEVGGYCDQVLLTEDHTRVADAIAQVEPAAIFGTQMERHVGKRLRIPCGVISAPMHVQDFPIGYRPFLGYEGANQIVDLIYNSFTLGMEDHLLEVFGGHDTKEVIHKSLSADSDLIWTREAQAELNKVPGFVRGKVKRNTEKFARERGLTEITLEVMYAAKEALGA.

[4Fe-4S] cluster is bound at residue Asp-36. The Proton donor role is filled by Asp-296. Substrate is bound at residue 431 to 432 (GM).

This sequence belongs to the ChlB/BchB/BchZ family. In terms of assembly, protochlorophyllide reductase is composed of three subunits; ChlL, ChlN and ChlB. Forms a heterotetramer of two ChlB and two ChlN subunits. It depends on [4Fe-4S] cluster as a cofactor.

It catalyses the reaction chlorophyllide a + oxidized 2[4Fe-4S]-[ferredoxin] + 2 ADP + 2 phosphate = protochlorophyllide a + reduced 2[4Fe-4S]-[ferredoxin] + 2 ATP + 2 H2O. It functions in the pathway porphyrin-containing compound metabolism; chlorophyll biosynthesis (light-independent). Its function is as follows. Component of the dark-operative protochlorophyllide reductase (DPOR) that uses Mg-ATP and reduced ferredoxin to reduce ring D of protochlorophyllide (Pchlide) to form chlorophyllide a (Chlide). This reaction is light-independent. The NB-protein (ChlN-ChlB) is the catalytic component of the complex. The sequence is that of Light-independent protochlorophyllide reductase subunit B from Synechococcus sp. (strain JA-3-3Ab) (Cyanobacteria bacterium Yellowstone A-Prime).